A 249-amino-acid polypeptide reads, in one-letter code: Probable WRKY transcription factor 64 (249 aa).

Positions 97-165 form a DNA-binding region, WRKY; that stretch reads SPTPRPDDGF…YLGKHVCKAV (69 aa).

The protein belongs to the WRKY group III family.

Its subcellular location is the nucleus. Functionally, transcription factor. Interacts specifically with the W box (5'-(T)TGAC[CT]-3'), a frequently occurring elicitor-responsive cis-acting element. This chain is Probable WRKY transcription factor 64 (WRKY64), found in Arabidopsis thaliana (Mouse-ear cress).